The following is a 650-amino-acid chain: Probable basic-leucine zipper transcription factor K (650 aa).

A coiled-coil region spans residues 37 to 180 (IDNNNNNYSN…KQQKQQQQEQ (144 aa)). Disordered regions lie at residues 109–130 (IPQQ…QEQE) and 242–279 (TTLN…NNNL). Residues 118-129 (DQQEDQDQEQEQ) are compositionally biased toward acidic residues. A compositionally biased stretch (polar residues) spans 242-251 (TTLNTNLQSD). Over residues 252–278 (NNNNNNNNNNNNNNNNNNNNNNNNNNN) the composition is skewed to low complexity. A coiled-coil region spans residues 259–286 (NNNNNNNNNNNNNNNNNNNNLLNEKQIE). In terms of domain architecture, bZIP spans 305-368 (FNKIEKGKRN…IEIMRSEPES (64 aa)). The basic motif stretch occupies residues 307–327 (KIEKGKRNQTESSKNFRERKK). The segment at 330 to 337 (IKDIELKL) is leucine-zipper. Positions 452–466 (NNNNNNNNNNNNNNN) are enriched in low complexity. Residues 452-473 (NNNNNNNNNNNNNNNDNDDDNE) form a disordered region.

This sequence belongs to the bZIP family.

The protein localises to the nucleus. Its function is as follows. Probable transcriptional regulator. This Dictyostelium discoideum (Social amoeba) protein is Probable basic-leucine zipper transcription factor K (bzpK).